The sequence spans 316 residues: Probable peptidyl-tRNA hydrolase 2 (316 aa).

Residues 1 to 127 (MSENIPDIDP…SHPVDPQEPN (127 aa)) are disordered. The span at 44-53 (PTPSSVTVDN) shows a compositional bias: polar residues. The span at 75 to 89 (IPEVPIPSSAISISS) shows a compositional bias: low complexity. The 42-residue stretch at 128–169 (EVNNEYLAHLLDLGFDEYTAVLALKRTNSAGVEQAVAWIVER) folds into the UBA domain. Residues 170–193 (SNESDFDEDSSSSENEADEEMGAV) form a disordered region. Positions 173-190 (SDFDEDSSSSENEADEEM) are enriched in acidic residues.

The protein belongs to the PTH2 family.

It carries out the reaction an N-acyl-L-alpha-aminoacyl-tRNA + H2O = an N-acyl-L-amino acid + a tRNA + H(+). In terms of biological role, the natural substrate for this enzyme may be peptidyl-tRNAs which drop off the ribosome during protein synthesis. The sequence is that of Probable peptidyl-tRNA hydrolase 2 from Caenorhabditis elegans.